Here is a 316-residue protein sequence, read N- to C-terminus: uncharacterized protein (316 aa).

Substrate is bound at residue threonine 126. Catalysis depends on tyrosine 149, which acts as the Proton acceptor.

The protein belongs to the NAD(P)-dependent epimerase/dehydratase family.

This is an uncharacterized protein from Bacillus subtilis (strain 168).